Here is a 600-residue protein sequence, read N- to C-terminus: MTTSESSSTSSVKIYFRLLSYVRPHVGIFLLSIIGFVIFASTQPMLAGILKYFVDGLTNPEAVLFPNVPYLRELQLLQAVPLLIVLIAAWQGLGSFLGNYFLAKVSLGLVHDLRVELFNKLLVLPNRYFDTTNSGHLISRITFNVTMVTGAATDAIKVVIREGLTVVFLFIYLLMMNWKLTLVMLAILPLIAVMVGSASKKFRKQSKKIQVAMGDVTHVASETIQGYRVVRSFGGESYEQNRFAQASDSNTRKQLRMTKTGAIYTPMLQLVIYSAMAVLMFLVLFLRGDATAGDLVAYITAAGLLPKPIRQLSEVSSTIQKGVAGAESIFEQLDVEEEVDTGTIERDRVTGHLEVKNLSFFYPQTERQVLNDISFSAAPGQMIALVGRSGSGKSTLANLIPRFYGHEMGNILLDGVEINDYRLRNLRKHIAQVNQNVTLFNDTIANNIAYGDLAGAPRADIEAAAADAYAKEFIDQLPQGFDTQVGENGVLLSGGQRQRLAIARALLKNAPLLILDEATSALDTESERHIQAALDHVMKGRTTLVIAHRLSTIEKADMILVMDAGQIVERGTHTELLAQNGYYARLHAMGLDEPSPVGAV.

4 helical membrane passes run 26-46 (VGIFLLSIIGFVIFASTQPML), 82-102 (LLIVLIAAWQGLGSFLGNYFL), 167-187 (VFLFIYLLMMNWKLTLVMLAI), and 266-286 (PMLQLVIYSAMAVLMFLVLFL). The region spanning 30 to 321 (LLSIIGFVIF…LSEVSSTIQK (292 aa)) is the ABC transmembrane type-1 domain. The 237-residue stretch at 353 to 589 (LEVKNLSFFY…NGYYARLHAM (237 aa)) folds into the ABC transporter domain. 387 to 394 (GRSGSGKS) is a binding site for ATP.

The protein belongs to the ABC transporter superfamily. Lipid exporter (TC 3.A.1.106) family. As to quaternary structure, homodimer.

Its subcellular location is the cell inner membrane. It catalyses the reaction ATP + H2O + lipid A-core oligosaccharideSide 1 = ADP + phosphate + lipid A-core oligosaccharideSide 2.. Functionally, involved in lipopolysaccharide (LPS) biosynthesis. Translocates lipid A-core from the inner to the outer leaflet of the inner membrane. Transmembrane domains (TMD) form a pore in the inner membrane and the ATP-binding domain (NBD) is responsible for energy generation. The chain is ATP-dependent lipid A-core flippase from Pseudomonas savastanoi pv. phaseolicola (strain 1448A / Race 6) (Pseudomonas syringae pv. phaseolicola (strain 1448A / Race 6)).